Reading from the N-terminus, the 914-residue chain is Eukaryotic initiation factor 4F subunit p130 (914 aa).

Positions 1–12 (MTDQRGPPPPHP) are enriched in pro residues. Disordered regions lie at residues 1 to 84 (MTDQ…YNNR), 128 to 205 (PPYT…NEAV), 240 to 351 (ERKK…VNKS), and 457 to 535 (IARN…LVPS). Residues 26-44 (NQYSGANNSQPNNHYNENL) show a composition bias toward polar residues. The segment covering 59–73 (KNGKYGTNKYNNRNN) has biased composition (low complexity). The residue at position 74 (serine 74) is a Phosphoserine. Positions 145–155 (PKTTKIEITTK) are enriched in low complexity. The segment covering 156 to 195 (TGERLNLKKFHEEKKASKGEEKNDGVEQKSKSGTPFEKEA) has biased composition (basic and acidic residues). Phosphothreonine is present on threonine 196. Positions 201–315 (ANEAVKDTLT…TGSVTKSVTF (115 aa)) are interaction with PAB1. Residues 240-263 (ERKKNGLISETEKKQETSNHDNTD) are compositionally biased toward basic and acidic residues. Composition is skewed to polar residues over residues 298-325 (SVKT…SSSQ) and 339-348 (ISDTTGGKTV). Phosphothreonine is present on threonine 301. Over residues 496 to 529 (RMGDDRRSNRGYTSRKDREKAAEKAEEQAPKEEI) the composition is skewed to basic and acidic residues. Serine 503 carries the phosphoserine modification. The 244-residue stretch at 567–810 (ERKMKSLLNK…IDVKELREIK (244 aa)) folds into the MIF4G domain. The interval 833-914 (QLRQKKNSQR…ALMNNDGDSD (82 aa)) is disordered. Positions 841–867 (QRSNSRFNNHNQSNSNRYSSNRRNMQN) are enriched in low complexity. The span at 868–886 (TQRDSFASTKTGSFRNNQR) shows a compositional bias: polar residues. Serine 913 carries the phosphoserine modification.

It belongs to the eukaryotic initiation factor 4G family. As to quaternary structure, component of the eIF4F complex, which composition varies with external and internal environmental conditions. It is composed of at least eIF4A (TIF1/TIF2), eIF4E (TIF45) and eIF4G (TIF4631 or TIF4632). Interacts with PAT1 in a RNA-dependent manner.

It is found in the cytoplasm. Component of the eIF4F complex, which interacts with the mRNA cap structure and serves as an initial point of assembly for the translation apparatus. Stimulates translation by interaction with polyadenylate-binding protein PAB1, bringing the 5'- and 3'-ends of the mRNA in proximity. The formation of this circular mRNP structure appears to be critical for the synergistic effects of the cap and the poly(A) tail in facilitating translation initiation, recycling of ribosomes, and mRNA stability. TIF4632 is probably essential when TIF4631 is missing. The polypeptide is Eukaryotic initiation factor 4F subunit p130 (Saccharomyces cerevisiae (strain ATCC 204508 / S288c) (Baker's yeast)).